The chain runs to 124 residues: uncharacterized protein (124 aa).

The protein localises to the cytoplasm. It is found in the nucleus. This is an uncharacterized protein from Schizosaccharomyces pombe (strain 972 / ATCC 24843) (Fission yeast).